Consider the following 505-residue polypeptide: Photosystem II CP47 reaction center protein (505 aa).

Over 1-19 (GLPWYRVHTVLINDPGRLI) the chain is Cytoplasmic. Positions 8, 22, 25, 99, and 113 each coordinate chlorophyll a. The chain crosses the membrane as a helical span at residues 20-35 (AAHLMHTALVAGWAGS). Residues 36–99 (MALYELATFD…WSFEGVALAH (64 aa)) lie on the Lumenal side of the membrane. The chain crosses the membrane as a helical span at residues 100–114 (IVLSGLLFLAACWHW). The Cytoplasmic portion of the chain corresponds to 115 to 138 (VYWDLELFRDPRTGEPALDLPKMF). Residues 139–155 (GIHLFLAGLLCFGFGAF) traverse the membrane as a helical segment. Residues histidine 141, histidine 156, histidine 200, histidine 201, and histidine 215 each contribute to the chlorophyll a site. The Lumenal portion of the chain corresponds to 156–201 (HLTGLFGPGMWVSDPYGLTGSVQPVAPEWGPDGFNPYNPGGVVAHH). The chain crosses the membrane as a helical span at residues 202 to 217 (IAAGIVGIIAGLFHIL). Residues 218-235 (VRPPQRLYKALRMGNIET) are Cytoplasmic-facing. A helical membrane pass occupies residues 236–251 (VLSSSIAAVFFAAFVV). At 252-455 (AGTMWYGSAT…PRGWFTFAHA (204 aa)) the chain is on the lumenal side. Histidine 454, histidine 465, and histidine 468 together coordinate chlorophyll a. A helical membrane pass occupies residues 456-471 (VFALLFFFGHIWHGAR). Residues 472–505 (TLFRDVFSGIDPELSPEQVEWGFYQKVGDVTTRK) are Cytoplasmic-facing.

This sequence belongs to the PsbB/PsbC family. PsbB subfamily. As to quaternary structure, PSII is composed of 1 copy each of membrane proteins PsbA, PsbB, PsbC, PsbD, PsbE, PsbF, PsbH, PsbI, PsbJ, PsbK, PsbL, PsbM, PsbT, PsbX, PsbY, PsbZ, Psb30/Ycf12, peripheral proteins PsbO, CyanoQ (PsbQ), PsbU, PsbV and a large number of cofactors. It forms dimeric complexes. Requires Binds multiple chlorophylls. PSII binds additional chlorophylls, carotenoids and specific lipids. as cofactor.

It localises to the cellular thylakoid membrane. Functionally, one of the components of the core complex of photosystem II (PSII). It binds chlorophyll and helps catalyze the primary light-induced photochemical processes of PSII. PSII is a light-driven water:plastoquinone oxidoreductase, using light energy to abstract electrons from H(2)O, generating O(2) and a proton gradient subsequently used for ATP formation. The polypeptide is Photosystem II CP47 reaction center protein (Thermostichus vulcanus (Synechococcus vulcanus)).